The sequence spans 192 residues: Transmembrane protein 276 (192 aa).

The first 32 residues, 1-32 (MAPKPGAEWSTALSHLVLGVVSLHAAVSTAEA), serve as a signal peptide directing secretion. Helical transmembrane passes span 35–55 (GAAA…APGL), 63–83 (AGAW…FHWV), 89–109 (SANL…HLGP), and 114–134 (VAGQ…AVFT).

The protein localises to the membrane. This Homo sapiens (Human) protein is Transmembrane protein 276.